We begin with the raw amino-acid sequence, 361 residues long: MTQVYNFSAGPAMLPVEVLRRAEQELRNWHGLGTSVMEISHRSKEFMQVAEESEKDLRDLLQIPANYKVLFCHGGARAQFAAVPLNLLGDRNSADYIDGGYWAHSAIKEAQKYCTPNVIDVTTHDNGLTGIQPMKQWKLSDNAAYVHYCPNETIDGVAINEQPDFGNKVVVADYSSSILSRPIDISRYGVIYAGAQKNIGPAGLTLVIVREDLLGKAHTALPSILDYKVLADNDSMFNTPPTFAWYLSGLVFKWLKEQGGLCEMEKRNQAKAELLYGAIDRTGFYRNQVAITNRSWMNVPFQMADASLDKLFLREAEAQGLQALKGHRVAGGMRASIYNAMPIEGVKALTDFMADFERRHG.

Residue arginine 42 participates in L-glutamate binding. Pyridoxal 5'-phosphate-binding positions include 76–77 (AR), tryptophan 102, threonine 153, aspartate 173, and glutamine 196. Position 197 is an N6-(pyridoxal phosphate)lysine (lysine 197). Pyridoxal 5'-phosphate is bound at residue 238–239 (NT).

The protein belongs to the class-V pyridoxal-phosphate-dependent aminotransferase family. SerC subfamily. In terms of assembly, homodimer. Pyridoxal 5'-phosphate serves as cofactor.

Its subcellular location is the cytoplasm. It carries out the reaction O-phospho-L-serine + 2-oxoglutarate = 3-phosphooxypyruvate + L-glutamate. The catalysed reaction is 4-(phosphooxy)-L-threonine + 2-oxoglutarate = (R)-3-hydroxy-2-oxo-4-phosphooxybutanoate + L-glutamate. It functions in the pathway amino-acid biosynthesis; L-serine biosynthesis; L-serine from 3-phospho-D-glycerate: step 2/3. It participates in cofactor biosynthesis; pyridoxine 5'-phosphate biosynthesis; pyridoxine 5'-phosphate from D-erythrose 4-phosphate: step 3/5. Catalyzes the reversible conversion of 3-phosphohydroxypyruvate to phosphoserine and of 3-hydroxy-2-oxo-4-phosphonooxybutanoate to phosphohydroxythreonine. The polypeptide is Phosphoserine aminotransferase (Yersinia pestis (strain Pestoides F)).